The chain runs to 296 residues: ATP synthase gamma chain (296 aa).

A disordered region spans residues 194–216 (IPASAGQAANDNAGSDQPAGDYE).

It belongs to the ATPase gamma chain family. F-type ATPases have 2 components, CF(1) - the catalytic core - and CF(0) - the membrane proton channel. CF(1) has five subunits: alpha(3), beta(3), gamma(1), delta(1), epsilon(1). CF(0) has three main subunits: a, b and c.

It localises to the cell inner membrane. In terms of biological role, produces ATP from ADP in the presence of a proton gradient across the membrane. The gamma chain is believed to be important in regulating ATPase activity and the flow of protons through the CF(0) complex. The sequence is that of ATP synthase gamma chain from Acidiphilium cryptum (strain JF-5).